The primary structure comprises 276 residues: 4-hydroxy-3-methylbut-2-enyl diphosphate reductase (276 aa).

Cys-12 is a binding site for [4Fe-4S] cluster. Residues His-36 and His-71 each contribute to the (2E)-4-hydroxy-3-methylbut-2-enyl diphosphate site. Dimethylallyl diphosphate-binding residues include His-36 and His-71. Positions 36 and 71 each coordinate isopentenyl diphosphate. Residue Cys-93 coordinates [4Fe-4S] cluster. Residue His-121 coordinates (2E)-4-hydroxy-3-methylbut-2-enyl diphosphate. Residue His-121 coordinates dimethylallyl diphosphate. His-121 contributes to the isopentenyl diphosphate binding site. Residue Glu-123 is the Proton donor of the active site. Thr-160 is a (2E)-4-hydroxy-3-methylbut-2-enyl diphosphate binding site. A [4Fe-4S] cluster-binding site is contributed by Cys-188. (2E)-4-hydroxy-3-methylbut-2-enyl diphosphate is bound by residues Ser-216, Ser-217, Asn-218, and Ser-259. Dimethylallyl diphosphate-binding residues include Ser-216, Ser-217, Asn-218, and Ser-259. Isopentenyl diphosphate contacts are provided by Ser-216, Ser-217, Asn-218, and Ser-259.

This sequence belongs to the IspH family. [4Fe-4S] cluster is required as a cofactor.

It catalyses the reaction isopentenyl diphosphate + 2 oxidized [2Fe-2S]-[ferredoxin] + H2O = (2E)-4-hydroxy-3-methylbut-2-enyl diphosphate + 2 reduced [2Fe-2S]-[ferredoxin] + 2 H(+). The enzyme catalyses dimethylallyl diphosphate + 2 oxidized [2Fe-2S]-[ferredoxin] + H2O = (2E)-4-hydroxy-3-methylbut-2-enyl diphosphate + 2 reduced [2Fe-2S]-[ferredoxin] + 2 H(+). It functions in the pathway isoprenoid biosynthesis; dimethylallyl diphosphate biosynthesis; dimethylallyl diphosphate from (2E)-4-hydroxy-3-methylbutenyl diphosphate: step 1/1. The protein operates within isoprenoid biosynthesis; isopentenyl diphosphate biosynthesis via DXP pathway; isopentenyl diphosphate from 1-deoxy-D-xylulose 5-phosphate: step 6/6. Catalyzes the conversion of 1-hydroxy-2-methyl-2-(E)-butenyl 4-diphosphate (HMBPP) into a mixture of isopentenyl diphosphate (IPP) and dimethylallyl diphosphate (DMAPP). Acts in the terminal step of the DOXP/MEP pathway for isoprenoid precursor biosynthesis. This is 4-hydroxy-3-methylbut-2-enyl diphosphate reductase from Nautilia profundicola (strain ATCC BAA-1463 / DSM 18972 / AmH).